We begin with the raw amino-acid sequence, 1195 residues long: Voltage-gated inwardly rectifying potassium channel KCNH7 (1195 aa).

Residues 1–412 lie on the Cytoplasmic side of the membrane; sequence MPVRRGHVAP…YSPFKAVWDW (412 aa). The PAS domain maps to 41-70; the sequence is IIYCNDGFCEMTGFSRPDVMQKPCTCDFLH. The PAC domain maps to 92–144; the sequence is RKVEVTYYHKNGSTFICNTHIIPVKNQEGVAMMFIINFEYVTDEENAATPERV. A Phosphoserine modification is found at serine 174. The segment at 194 to 216 is disordered; that stretch reads SVAMKHFKSPTKESCSPSEADDT. A phosphoserine mark is found at serine 238 and serine 319. The chain crosses the membrane as a helical span at residues 413–433; sequence LILLLVIYTAIFTPYSAAFLL. Over 434–449 the chain is Extracellular; sequence NDREEQKRRECGYSCS. The helical transmembrane segment at 450-470 threads the bilayer; sequence PLNVVDLIVDIMFIIDILINF. The Cytoplasmic portion of the chain corresponds to 471–494; the sequence is RTTYVNQNEEVVSDPAKIAIHYFK. Residues 495 to 515 traverse the membrane as a helical segment; it reads GWFLIDMVAAIPFDLLIFGSG. Residues 516–521 are Extracellular-facing; the sequence is SDETTT. The chain crosses the membrane as a helical; Voltage-sensor span at residues 522–542; the sequence is LIGLLKTARLLRLVRVARKLD. At 543-549 the chain is on the cytoplasmic side; the sequence is RYSEYGA. Residues 550–570 form a helical membrane-spanning segment; the sequence is AVLMLLMCIFALIAHWLACIW. Residues 571–614 lie on the Extracellular side of the membrane; the sequence is YAIGNVERPYLTDKIGWLDSLGTQIGKRYNDSDSSSGPSIKDKY. N-linked (GlcNAc...) asparagine glycosylation is present at asparagine 600. Residues 615–635 constitute an intramembrane region (pore-forming); sequence VTALYFTFSSLTSVGFGNVSP. The short motif at 627–632 is the Selectivity filter element; that stretch reads SVGFGN. Residues 636-641 are Extracellular-facing; it reads NTNSEK. Residues 642–662 form a helical membrane-spanning segment; it reads IFSICVMLIGSLMYASIFGNV. Topologically, residues 663-1195 are cytoplasmic; it reads SAIIQRLYSG…HVSDPGLPGK (533 aa). Residues 745–845 are cNMP-binding domain; sequence AFRGASKGCL…IQREDLLEVL (101 aa). A disordered region spans residues 870-915; the sequence is AKSQSVNDSEGDTGKLRRRRLSFESEGEKDFSKENSANDADDSTDT. A compositionally biased stretch (basic and acidic residues) spans 890-902; sequence LSFESEGEKDFSK. Phosphoserine occurs at positions 891 and 894. Positions 1027–1054 form a coiled coil; the sequence is YGEVEQRLDLLQEQLNRLESQMTTDIQA.

This sequence belongs to the potassium channel family. H (Eag) (TC 1.A.1.20) subfamily. Kv11.3/KCNH7 sub-subfamily. As to quaternary structure, the potassium channel is probably composed of a homo- or heterotetrameric complex of pore-forming alpha subunits that can associate only within their subfamily.

It localises to the cell membrane. The enzyme catalyses K(+)(in) = K(+)(out). Pore-forming (alpha) subunit of voltage-gated inwardly rectifying potassium channel. Exhibits faster activation and deactivation kinetics and slow inactivation at membrane potentials positive to 240 mV, resulting in the weakest inward rectification. This chain is Voltage-gated inwardly rectifying potassium channel KCNH7, found in Mus musculus (Mouse).